The chain runs to 1396 residues: Melanoma inhibitory activity protein 2 (1396 aa).

Positions 1 to 22 (MAEVSVQRILLLVVSLAKCLEG) are cleaved as a signal peptide. At 23–604 (TKLLAHLKKC…YGFMSSALSP (582 aa)) the chain is on the lumenal side. One can recognise an SH3 domain in the interval 39–101 (TLISRVLALR…PRDAVEIEEV (63 aa)). The N-linked (GlcNAc...) asparagine glycan is linked to N59. Disordered stretches follow at residues 197-288 (EGAG…VPDE) and 331-361 (ESNP…TDKE). Residues 243–258 (SDTEPTQELALEEESD) show a composition bias toward acidic residues. N366 carries an N-linked (GlcNAc...) asparagine glycan. 2 disordered regions span residues 396-421 (DKGE…PEKE) and 525-557 (PMEE…ELSV). The stretch at 605-625 (IEILLESVVAALPEDMRADFN) is an intramembrane region. Topologically, residues 626-628 (PSG) are lumenal. A helical transmembrane segment spans residues 629–649 (FSLELAVCVLSVGLLAVVLFL). At 650-1396 (WRGFRSIRSR…AADPPETQEA (747 aa)) the chain is on the cytoplasmic side. Residues 651 to 1243 (RGFRSIRSRF…RSYNMPSLDK (593 aa)) are mediates interaction with MIA3. Coiled-coil stretches lie at residues 693–867 (YEGL…LVTS) and 914–1082 (AAKL…NRQK). Positions 1103–1396 (PNTAFGREHS…AADPPETQEA (294 aa)) are disordered. The proline-rich domain (PRD); probably mediates interaction with COPII coat subunits stretch occupies residues 1105–1396 (TAFGREHSPY…AADPPETQEA (292 aa)). Residues 1135-1146 (LLEGPLRLSPLL) show a composition bias toward low complexity. The span at 1165 to 1179 (MNTERGESSYDRLSD) shows a compositional bias: basic and acidic residues. Residues 1252–1269 (MESSGNGTKDNLGNSNVP) are compositionally biased toward polar residues. Composition is skewed to pro residues over residues 1331-1342 (RDFPGPPLPPFP) and 1351-1368 (GFPP…PPPH).

This sequence belongs to the MIA/OTOR family. As to quaternary structure, interacts with MIA3. Interacts with the COPII coat subunits SEC23A, SEC23B and maybe SEC24C. Interacts with PREB; recruits PREB to endoplasmic reticulum exit sites. Interacts with APOB. Isoform 1 is expressed in liver (at protein level). Isoform 2 is highly expressed in liver and weakly in testis.

Its subcellular location is the endoplasmic reticulum membrane. Its function is as follows. Plays a role in the transport of cargos that are too large to fit into COPII-coated vesicles and require specific mechanisms to be incorporated into membrane-bound carriers and exported from the endoplasmic reticulum. Plays a role in the secretion of lipoproteins, pre-chylomicrons and pre-VLDLs, by participating in their export from the endoplasmic reticulum. Thereby, may play a role in cholesterol and triglyceride homeostasis. Required for collagen VII (COL7A1) secretion by loading COL7A1 into transport carriers and recruiting PREB/SEC12 at the endoplasmic reticulum exit sites. This is Melanoma inhibitory activity protein 2 from Mus musculus (Mouse).